The primary structure comprises 165 residues: Cystatin-like protein (165 aa).

The first 19 residues, M1–A19, serve as a signal peptide directing secretion. Intrachain disulfides connect C80-C92 and C104-C118.

Its function is as follows. Involved in hypoxia tolerance. This is Cystatin-like protein from Clarias batrachus (Walking catfish).